The sequence spans 400 residues: CCA-adding enzyme (400 aa).

Residues G28 and R31 each contribute to the ATP site. Residues G28 and R31 each contribute to the CTP site. Mg(2+) contacts are provided by D41 and D43. Residues R112, D155, R158, R161, and R164 each coordinate ATP. CTP-binding residues include R112, D155, R158, R161, and R164.

It belongs to the tRNA nucleotidyltransferase/poly(A) polymerase family. Bacterial CCA-adding enzyme type 3 subfamily. Homodimer. Mg(2+) serves as cofactor.

The enzyme catalyses a tRNA precursor + 2 CTP + ATP = a tRNA with a 3' CCA end + 3 diphosphate. It catalyses the reaction a tRNA with a 3' CCA end + 2 CTP + ATP = a tRNA with a 3' CCACCA end + 3 diphosphate. Functionally, catalyzes the addition and repair of the essential 3'-terminal CCA sequence in tRNAs without using a nucleic acid template. Adds these three nucleotides in the order of C, C, and A to the tRNA nucleotide-73, using CTP and ATP as substrates and producing inorganic pyrophosphate. tRNA 3'-terminal CCA addition is required both for tRNA processing and repair. Also involved in tRNA surveillance by mediating tandem CCA addition to generate a CCACCA at the 3' terminus of unstable tRNAs. While stable tRNAs receive only 3'-terminal CCA, unstable tRNAs are marked with CCACCA and rapidly degraded. The chain is CCA-adding enzyme from Oceanobacillus iheyensis (strain DSM 14371 / CIP 107618 / JCM 11309 / KCTC 3954 / HTE831).